Here is a 206-residue protein sequence, read N- to C-terminus: Ras-related protein Ral-B (206 aa).

21 to 29 contributes to the GTP binding site; that stretch reads GSGGVGKSA. The Effector region signature appears at 43–51; that stretch reads YEPTKADSY. GTP is bound by residues 68–72, 128–131, and 158–160; these read DTAGQ, NKSD, and SAK. Positions 180–189 are enriched in basic and acidic residues; sequence KMSENKDKNG. Residues 180–206 are disordered; the sequence is KMSENKDKNGKKSGKNKKSFKERCCLL. Cysteine methyl ester is present on C203. C203 is lipidated: S-geranylgeranyl cysteine. The propeptide at 204 to 206 is removed in mature form; it reads CLL.

Belongs to the small GTPase superfamily. Ras family. Interacts with EXOC2/Sec5 and EXOC8/Exo84. Interacts (via effector domain) with RALBP1. Prenylation is essential for membrane localization. In terms of processing, the farnesylated form confers resistance to the proapoptotic and anti-anchorage-dependent growth effects of some geranylgeranyltransferase I inhibitors.

Its subcellular location is the cell membrane. It is found in the midbody. The enzyme catalyses GTP + H2O = GDP + phosphate + H(+). Its activity is regulated as follows. Alternates between an inactive form bound to GDP and an active form bound to GTP. Activated by a guanine nucleotide-exchange factor (GEF) and inactivated by a GTPase-activating protein (GAP). Functionally, multifunctional GTPase involved in a variety of cellular processes including gene expression, cell migration, cell proliferation, oncogenic transformation and membrane trafficking. Accomplishes its multiple functions by interacting with distinct downstream effectors. Acts as a GTP sensor for GTP-dependent exocytosis of dense core vesicles. Required both to stabilize the assembly of the exocyst complex and to localize functional exocyst complexes to the leading edge of migrating cells. Required for suppression of apoptosis. In late stages of cytokinesis, upon completion of the bridge formation between dividing cells, mediates exocyst recruitment to the midbody to drive abscission. Involved in ligand-dependent receptor mediated endocytosis of the EGF and insulin receptors. In Macaca fascicularis (Crab-eating macaque), this protein is Ras-related protein Ral-B (RALB).